The primary structure comprises 39 residues: Sarcotoxin-1C (39 aa).

An Arginine amide modification is found at Arg39.

The protein belongs to the cecropin family.

Its subcellular location is the secreted. In terms of biological role, sarcotoxins, which are potent bactericidal proteins, are produced in response to injury. They are cytotoxic to both Gram-positive and Gram-negative bacteria. This is Sarcotoxin-1C from Sarcophaga peregrina (Flesh fly).